We begin with the raw amino-acid sequence, 1487 residues long: Collagen alpha-1(II) chain (1487 aa).

Residues 1-25 form the signal peptide; the sequence is MIRLGAPQTLVLLTLLVAAVLRCHG. Residues 26 to 181 constitute a propeptide, N-terminal propeptide; it reads QDVQKAGSCV…PPGLGGNFAA (156 aa). Residues 32-90 enclose the VWFC domain; the sequence is GSCVQDGQRYNDKDVWKPEPCRICVCDTGTVLCDDIICEDMKDCLSPETPFGECCPICS. Residues 96–1234 form a disordered region; it reads ASGQPGPKGQ…GLGQREKGPD (1139 aa). Basic and acidic residues-rich tracts occupy residues 105–116 and 133–154; these read QKGEPGDIKDIV and PRGDRGDKGEKGAPGPRGRDGE. The segment covering 158 to 173 has biased composition (pro residues); sequence PGNPGPPGPPGPPGPP. Lysine 190 carries the 5-hydroxylysine modification. Lysine 190 carries an O-linked (Gal...) hydroxylysine glycan. Over residues 192–203 the composition is skewed to low complexity; that stretch reads GGAQMGVMQGPM. The interval 201–1214 is triple-helical region; it reads GPMGPMGPRG…PGPPGPPGPP (1014 aa). Over residues 208–217 the composition is skewed to pro residues; sequence PRGPPGPAGA. Hydroxyproline occurs at positions 212, 218, 230, 233, 245, 248, 251, 260, 269, 278, 281, and 284. A compositionally biased stretch (low complexity) spans 218–239; it reads PGPQGFQGNPGEPGEPGVSGPM. Positions 241-250 are enriched in pro residues; that stretch reads PRGPPGPPGK. A compositionally biased stretch (basic and acidic residues) spans 251 to 265; sequence PGDDGEAGKPGKSGE. Lysine 287 is subject to 5-hydroxylysine. The O-linked (Gal...) hydroxylysine glycan is linked to lysine 287. Residue proline 293 is modified to Hydroxyproline. A 5-hydroxylysine modification is found at lysine 299. O-linked (Gal...) hydroxylysine glycosylation occurs at lysine 299. The residue at position 305 (proline 305) is a Hydroxyproline. At lysine 308 the chain carries 5-hydroxylysine. O-linked (Gal...) hydroxylysine glycosylation is present at lysine 308. The segment covering 310 to 320 has biased composition (low complexity); it reads ESGSPGENGSP. Hydroxyproline is present on residues proline 314, proline 320, proline 329, proline 350, proline 356, proline 365, proline 368, and proline 371. The span at 335–350 shows a compositional bias: low complexity; the sequence is TGPAGAAGARGNDGQP. The segment covering 360–369 has biased composition (gly residues); sequence GPAGGPGFPG. 2 stretches are compositionally biased toward low complexity: residues 370 to 382 and 391 to 431; these read APGAKGEAGPTGA and PRGE…AGAP. Lysine 374 is modified (5-hydroxylysine). Lysine 374 is a glycosylation site (O-linked (Gal...) hydroxylysine). Proline 395, proline 398, proline 401, proline 410, and proline 416 each carry hydroxyproline. 5-hydroxylysine is present on lysine 419. A hydroxyproline mark is found at proline 425, proline 431, proline 434, and proline 440. Pro residues predominate over residues 433-442; the sequence is FPGPRGPPGP. Lysine 452 is modified (5-hydroxylysine). Proline 458 carries the hydroxyproline modification. Residues lysine 464 and lysine 470 each carry the 5-hydroxylysine modification. Hydroxyproline occurs at positions 473, 482, 497, 506, 512, and 518. Lysine 527 carries the 5-hydroxylysine modification. Proline 530 carries the post-translational modification Hydroxyproline. Position 542 is a 5-hydroxylysine (lysine 542). Hydroxyproline is present on residues proline 551, proline 557, proline 566, proline 581, proline 587, proline 590, proline 599, and proline 605. Lysine 608 carries the 5-hydroxylysine modification. O-linked (Gal...) hydroxylysine glycosylation is present at lysine 608. The residue at position 614 (proline 614) is a Hydroxyproline. Position 620 is a 5-hydroxylysine (lysine 620). O-linked (Gal...) hydroxylysine glycosylation is present at lysine 620. Residues 622 to 631 are compositionally biased toward low complexity; the sequence is LPGAPGLRGL. 6 positions are modified to hydroxyproline: proline 623, proline 626, proline 632, proline 644, proline 659, and proline 668. A compositionally biased stretch (low complexity) spans 656-667; the sequence is QGAPGPSGFQGL. A 3-hydroxyproline modification is found at proline 670. 2 positions are modified to hydroxyproline: proline 671 and proline 674. Positions 721–736 are enriched in low complexity; sequence LPGTPGTDGPKGAAGP. The segment covering 764 to 775 has biased composition (basic and acidic residues); it reads KGDRGDVGEKGP. Composition is skewed to low complexity over residues 833 to 848 and 877 to 913; these read AGFAGPPGADGQPGAK and PTGVTGPKGARGAQGPPGATGFPGAAGRVGPPGSNGN. Proline 907 bears the 3-hydroxyproline mark. A 4-hydroxyproline mark is found at proline 908, proline 914, and proline 920. The span at 1069–1079 shows a compositional bias: pro residues; sequence APGPPGSPGPA. Residues 1091–1109 show a composition bias toward low complexity; it reads AGAQGPMGPAGPAGARGMP. Basic and acidic residues predominate over residues 1115–1129; the sequence is RGDKGETGEAGERGL. 5-hydroxylysine is present on lysine 1130. O-linked (Gal...) hydroxylysine glycosylation is present at lysine 1130. Proline 1144 bears the 3-hydroxyproline mark. Residues 1148–1157 show a composition bias toward low complexity; it reads SGDQGASGPA. Proline 1181 carries the 4-hydroxyproline modification. Position 1186 is a 3-hydroxyproline (proline 1186). Proline 1187 carries the post-translational modification 4-hydroxyproline. Residues 1199–1216 are compositionally biased toward pro residues; it reads AGPPGNPGPPGPPGPPGP. The residue at position 1201 (proline 1201) is a 3-hydroxyproline. 4-hydroxyproline is present on residues proline 1202 and proline 1205. The residue at position 1207 (proline 1207) is a 3-hydroxyproline. 2 positions are modified to 4-hydroxyproline: proline 1208 and proline 1211. Residue proline 1213 is modified to 3-hydroxyproline. Proline 1214 is subject to 4-hydroxyproline. The nonhelical region (C-terminal) stretch occupies residues 1215-1241; the sequence is GPGIDMSAFAGLGQREKGPDPLQYMRA. The region spanning 1253–1487 is the Fibrillar collagen NC1 domain; it reads AEVDATLKSL…GVDIGPVCFL (235 aa). Cystine bridges form between cysteine 1283–cysteine 1315, cysteine 1323–cysteine 1485, and cysteine 1393–cysteine 1438. Ca(2+)-binding residues include aspartate 1301, asparagine 1303, glutamine 1304, cysteine 1306, and aspartate 1309. Asparagine 1388 carries N-linked (GlcNAc...) asparagine glycosylation.

This sequence belongs to the fibrillar collagen family. Homotrimers of alpha 1(II) chains. Post-translationally, probably 3-hydroxylated on prolines by LEPREL1. Proline residues at the third position of the tripeptide repeating unit (G-X-P) are hydroxylated in some or all of the chains. Proline residues at the second position of the tripeptide repeating unit (G-P-X) are hydroxylated in some of the chains. In terms of processing, O-linked glycans consist of Glc-Gal disaccharides bound to the oxygen atom of post-translationally added hydroxyl groups. Contains mostly 4-hydroxyproline. Prolines at the third position of the tripeptide repeating unit (G-X-P) are 4-hydroxylated in some or all of the chains. Post-translationally, contains 3-hydroxyproline at a few sites. This modification occurs on the first proline residue in the sequence motif Gly-Pro-Hyp, where Hyp is 4-hydroxyproline. In terms of processing, lysine residues at the third position of the tripeptide repeating unit (G-X-Y) are 5-hydroxylated in some or all of the chains. O-glycosylated on hydroxylated lysine residues. The O-linked glycan consists of a Glc-Gal disaccharide.

The protein localises to the secreted. The protein resides in the extracellular space. It localises to the extracellular matrix. Type II collagen is specific for cartilaginous tissues. It is essential for the normal embryonic development of the skeleton, for linear growth and for the ability of cartilage to resist compressive forces. This is Collagen alpha-1(II) chain from Bos taurus (Bovine).